A 322-amino-acid chain; its full sequence is uncharacterized protein (322 aa).

Positions 277-322 (LVTYGGKDGPSDNEDGPSDDEDGPSDDEEGLSKDGVSEYYQSDLDD) are disordered. A compositionally biased stretch (acidic residues) spans 287-305 (SDNEDGPSDDEDGPSDDEE).

This is an uncharacterized protein from Frog virus 3 (isolate Goorha) (FV-3).